Reading from the N-terminus, the 91-residue chain is Probable Fe(2+)-trafficking protein (91 aa).

It belongs to the Fe(2+)-trafficking protein family.

In terms of biological role, could be a mediator in iron transactions between iron acquisition and iron-requiring processes, such as synthesis and/or repair of Fe-S clusters in biosynthetic enzymes. The sequence is that of Probable Fe(2+)-trafficking protein from Acidobacterium capsulatum (strain ATCC 51196 / DSM 11244 / BCRC 80197 / JCM 7670 / NBRC 15755 / NCIMB 13165 / 161).